Here is a 316-residue protein sequence, read N- to C-terminus: Apolipoprotein E (316 aa).

A signal peptide spans 1 to 18 (MKALWAVLVVTLLAGCLA). Repeat copies occupy residues 76–97 (VLME…EQLG), 98–119 (PMAE…SRLG), 120–141 (ADME…TMLG), 142–163 (QSTE…KRLM), 164–185 (RDAE…EGAE), 186–207 (RGVG…QRTA), 208–229 (NLGA…ARIR), and 230–251 (GRLE…EQME). The 8 X 22 AA approximate tandem repeats stretch occupies residues 76 to 251 (VLMEDTMTEL…RLEEMREQME (176 aa)). Methionine 139 is modified (methionine sulfoxide). Phosphoserine is present on serine 143. Positions 154–164 (HLRKLRKRLMR) are LDL and other lipoprotein receptors binding. Residue 158 to 161 (LRKR) coordinates heparin. A lipid-binding and lipoprotein association region spans residues 206–286 (TANLGAGAGK…GWFEPLVEDM (81 aa)). 225-232 (GARIRGRL) contacts heparin. A homooligomerization region spans residues 262-316 (QQMRLQAEIFQARLKGWFEPLVEDMQRQWANLVEKIQASVAANPIPPSSVPQESP). The tract at residues 274 to 286 (RLKGWFEPLVEDM) is specificity for association with VLDL.

This sequence belongs to the apolipoprotein A1/A4/E family. In terms of assembly, homotetramer. May interact with ABCA1; functionally associated with ABCA1 in the biogenesis of HDLs. May interact with APP/A4 amyloid-beta peptide; the interaction is extremely stable in vitro but its physiological significance is unclear. May interact with MAPT. May interact with MAP2. In the cerebrospinal fluid, interacts with secreted SORL1. Interacts with PMEL; this allows the loading of PMEL luminal fragment on ILVs to induce fibril nucleation. APOE exists as multiple glycosylated and sialylated glycoforms within cells and in plasma. The extent of glycosylation and sialylation are tissue and context specific. Post-translationally, glycated in plasma VLDL. In terms of processing, phosphorylated by FAM20C in the extracellular medium.

The protein resides in the secreted. It is found in the extracellular space. It localises to the extracellular matrix. The protein localises to the extracellular vesicle. Its subcellular location is the endosome. The protein resides in the multivesicular body. APOE is an apolipoprotein, a protein associating with lipid particles, that mainly functions in lipoprotein-mediated lipid transport between organs via the plasma and interstitial fluids. APOE is a core component of plasma lipoproteins and is involved in their production, conversion and clearance. Apolipoproteins are amphipathic molecules that interact both with lipids of the lipoprotein particle core and the aqueous environment of the plasma. As such, APOE associates with chylomicrons, chylomicron remnants, very low density lipoproteins (VLDL) and intermediate density lipoproteins (IDL) but shows a preferential binding to high-density lipoproteins (HDL). It also binds a wide range of cellular receptors including the LDL receptor/LDLR, the LDL receptor-related proteins LRP1, LRP2 and LRP8 and the very low-density lipoprotein receptor/VLDLR that mediate the cellular uptake of the APOE-containing lipoprotein particles. Finally, APOE also has a heparin-binding activity and binds heparan-sulfate proteoglycans on the surface of cells, a property that supports the capture and the receptor-mediated uptake of APOE-containing lipoproteins by cells. A main function of APOE is to mediate lipoprotein clearance through the uptake of chylomicrons, VLDLs, and HDLs by hepatocytes. APOE is also involved in the biosynthesis by the liver of VLDLs as well as their uptake by peripheral tissues ensuring the delivery of triglycerides and energy storage in muscle, heart and adipose tissues. By participating in the lipoprotein-mediated distribution of lipids among tissues, APOE plays a critical role in plasma and tissues lipid homeostasis. APOE is also involved in two steps of reverse cholesterol transport, the HDLs-mediated transport of cholesterol from peripheral tissues to the liver, and thereby plays an important role in cholesterol homeostasis. First, it is functionally associated with ABCA1 in the biogenesis of HDLs in tissues. Second, it is enriched in circulating HDLs and mediates their uptake by hepatocytes. APOE also plays an important role in lipid transport in the central nervous system, regulating neuron survival and sprouting. The polypeptide is Apolipoprotein E (Apoe) (Peromyscus leucopus (White-footed mouse)).